The primary structure comprises 85 residues: MKVTLIAILTCAAVLVLHTTAAEELEAESQLMEVGMPDTELAAVDEERLFECSASCEIEKEGNKDCKKKKCKGGWKCKFNMCVKV.

A signal peptide spans 1 to 22 (MKVTLIAILTCAAVLVLHTTAA). Positions 23-48 (EELEAESQLMEVGMPDTELAAVDEER) are excised as a propeptide. Intrachain disulfides connect Cys-52–Cys-66, Cys-56–Cys-77, and Cys-71–Cys-82.

Belongs to the neurotoxin 12 (Hwtx-2) family. 02 (Hwtx-2) subfamily. As to expression, expressed by the venom gland.

It localises to the secreted. Postsynaptic neurotoxin. The polypeptide is U4-theraphotoxin-Hhn1c (Cyriopagopus hainanus (Chinese bird spider)).